The primary structure comprises 392 residues: tRNA (guanine(26)-N(2)/guanine(27)-N(2))-dimethyltransferase (392 aa).

One can recognise a Trm1 methyltransferase domain in the interval 2–375 (EIVQEGIAKI…LSFEEVMKKM (374 aa)). S-adenosyl-L-methionine is bound by residues Arg36, Arg66, Asp84, Glu113, and Ala114. 4 residues coordinate Zn(2+): Cys247, Cys250, Cys266, and Cys269.

It belongs to the class I-like SAM-binding methyltransferase superfamily. Trm1 family.

The enzyme catalyses guanosine(26)/guanosine(27) in tRNA + 4 S-adenosyl-L-methionine = N(2)-dimethylguanosine(26)/N(2)-dimethylguanosine(27) in tRNA + 4 S-adenosyl-L-homocysteine + 4 H(+). Its function is as follows. Dimethylates the guanine residues at position 26 and 27 of one or more tRNAs using S-adenosyl-L-methionine as donor of the methyl groups. This chain is tRNA (guanine(26)-N(2)/guanine(27)-N(2))-dimethyltransferase, found in Aquifex aeolicus (strain VF5).